The chain runs to 884 residues: Schlafen family member 5 (884 aa).

An ATP-binding site is contributed by 574-581 (GLPGSGKT).

It belongs to the Schlafen family. Subgroup III subfamily.

May have a role in hematopoietic cell differentiation. The protein is Schlafen family member 5 (Slfn5) of Mus musculus (Mouse).